A 429-amino-acid chain; its full sequence is Glutamate-1-semialdehyde 2,1-aminomutase 2 (429 aa).

An N6-(pyridoxal phosphate)lysine modification is found at Lys267.

It belongs to the class-III pyridoxal-phosphate-dependent aminotransferase family. HemL subfamily. As to quaternary structure, homodimer. The cofactor is pyridoxal 5'-phosphate.

It is found in the cytoplasm. The enzyme catalyses (S)-4-amino-5-oxopentanoate = 5-aminolevulinate. The protein operates within porphyrin-containing compound metabolism; protoporphyrin-IX biosynthesis; 5-aminolevulinate from L-glutamyl-tRNA(Glu): step 2/2. The sequence is that of Glutamate-1-semialdehyde 2,1-aminomutase 2 (gsaB) from Bacillus subtilis (strain 168).